We begin with the raw amino-acid sequence, 228 residues long: L-ribulose-5-phosphate 4-epimerase UlaF (228 aa).

Residues 26 to 27 (GN), 43 to 44 (SG), and 72 to 73 (SS) contribute to the substrate site. The Zn(2+) site is built by D74, H93, and H95. Residue D118 is the Proton donor/acceptor of the active site. H167 lines the Zn(2+) pocket. Residue Y225 is the Proton donor/acceptor of the active site.

Belongs to the aldolase class II family. AraD/FucA subfamily. It depends on Zn(2+) as a cofactor.

It catalyses the reaction L-ribulose 5-phosphate = D-xylulose 5-phosphate. Its pathway is cofactor degradation; L-ascorbate degradation; D-xylulose 5-phosphate from L-ascorbate: step 4/4. Its function is as follows. Catalyzes the isomerization of L-ribulose 5-phosphate to D-xylulose 5-phosphate. Is involved in the anaerobic L-ascorbate utilization. The chain is L-ribulose-5-phosphate 4-epimerase UlaF from Salmonella paratyphi B (strain ATCC BAA-1250 / SPB7).